Here is a 387-residue protein sequence, read N- to C-terminus: Transcription termination/antitermination protein NusA (387 aa).

Residues 145–209 (GQVLTGVVTR…AKGPSLLVSR (65 aa)) form the S1 motif domain. A KH domain is found at 312-379 (AKKARVKVTK…ARERKAREEF (68 aa)).

This sequence belongs to the NusA family. As to quaternary structure, monomer. Binds directly to the core enzyme of the DNA-dependent RNA polymerase and to nascent RNA.

It is found in the cytoplasm. Functionally, participates in both transcription termination and antitermination. This Thermus thermophilus (strain ATCC 27634 / DSM 579 / HB8) protein is Transcription termination/antitermination protein NusA.